Here is a 154-residue protein sequence, read N- to C-terminus: Cyanate hydratase (154 aa).

Residues arginine 100, glutamate 103, and serine 126 contribute to the active site.

It belongs to the cyanase family.

It catalyses the reaction cyanate + hydrogencarbonate + 3 H(+) = NH4(+) + 2 CO2. Its function is as follows. Catalyzes the reaction of cyanate with bicarbonate to produce ammonia and carbon dioxide. In Aspergillus fumigatus (strain CBS 144.89 / FGSC A1163 / CEA10) (Neosartorya fumigata), this protein is Cyanate hydratase.